Here is a 39-residue protein sequence, read N- to C-terminus: Potassium channel toxin alpha-KTx 2.5 (39 aa).

3 disulfides stabilise this stretch: Cys7–Cys29, Cys13–Cys34, and Cys17–Cys36.

It belongs to the short scorpion toxin superfamily. Potassium channel inhibitor family. Alpha-KTx 02 subfamily. Expressed by the venom gland.

Its subcellular location is the secreted. Its function is as follows. Potent selective inhibitor of Kv1.1/KCNA1, Kv1.2/KCNA2, Kv1.3/KCNA3 voltage-gated potassium channels. Weak inhibitor of Kv1.6/KCNA6 potassium channel. It also shows a weak interaction with nicotinic acetylcholine receptors (nAChR), suggesting it may weakly inhibit it. The protein is Potassium channel toxin alpha-KTx 2.5 of Centruroides limbatus (Bark scorpion).